The following is a 177-amino-acid chain: Large ribosomal subunit protein uL6 (177 aa).

Belongs to the universal ribosomal protein uL6 family. In terms of assembly, part of the 50S ribosomal subunit.

Its function is as follows. This protein binds to the 23S rRNA, and is important in its secondary structure. It is located near the subunit interface in the base of the L7/L12 stalk, and near the tRNA binding site of the peptidyltransferase center. The chain is Large ribosomal subunit protein uL6 from Klebsiella pneumoniae subsp. pneumoniae (strain ATCC 700721 / MGH 78578).